The sequence spans 256 residues: Small ribosomal subunit protein uS3 (256 aa).

Positions 39-121 (IRTYLTKQLS…TIRINVVEVT (83 aa)) constitute a KH type-2 domain. The interval 227-256 (RHEQKFPLQQPKRRQQRRRPTFEDRSAQEA) is disordered. A compositionally biased stretch (basic and acidic residues) spans 246–256 (PTFEDRSAQEA).

It belongs to the universal ribosomal protein uS3 family. As to quaternary structure, part of the 30S ribosomal subunit. Forms a tight complex with proteins S10 and S14.

Functionally, binds the lower part of the 30S subunit head. Binds mRNA in the 70S ribosome, positioning it for translation. This is Small ribosomal subunit protein uS3 from Synechococcus sp. (strain JA-2-3B'a(2-13)) (Cyanobacteria bacterium Yellowstone B-Prime).